We begin with the raw amino-acid sequence, 159 residues long: Large ribosomal subunit protein uL11 (159 aa).

It belongs to the universal ribosomal protein uL11 family. Part of the ribosomal stalk of the 50S ribosomal subunit. Interacts with L10 and the large rRNA to form the base of the stalk. L10 forms an elongated spine to which L12 dimers bind in a sequential fashion forming a multimeric L10(L12)X complex.

Functionally, forms part of the ribosomal stalk which helps the ribosome interact with GTP-bound translation factors. This Methanococcus vannielii (strain ATCC 35089 / DSM 1224 / JCM 13029 / OCM 148 / SB) protein is Large ribosomal subunit protein uL11.